We begin with the raw amino-acid sequence, 353 residues long: MLTFMEHILYSFYDASGWHRDNLYALLTHSSQNLIDFRVPEGVAMNVSALSTPNSASSYTLTNLGHIQGSVAYLSTSLSLPRPHSGTLDLHTVVPGYHKLDPINSQDRIYDTIWQGGKPIHRQDSLLFGRLALPTNTLEAMYVRRFNPTTQLLVTCVSGAHLKSGGALTLYWQKDCRQYAHELLYSTNEALLGARGLYNFGVDMSKPHIASRLSVGGEFYYGVLNKSPGMSTALRYVTQSAYTGSPLTMTLTCNPIMGEFSSTYSLRTGPSSSFSTRYDFNMYSYLSNLSMGAEVWKSRDSVFKLSSSLQDKTARVLWGGRYKDILVNTGVAFDYGGRVPDVTAIGVEFQYAC.

The protein belongs to the MDM10 family. As to quaternary structure, component of the ER-mitochondria encounter structure (ERMES) or MDM complex, composed of MMM1, MDM10, MDM12 and MDM34. Associates with the mitochondrial outer membrane sorting assembly machinery SAM(core) complex.

Its subcellular location is the mitochondrion outer membrane. In terms of biological role, component of the ERMES/MDM complex, which serves as a molecular tether to connect the endoplasmic reticulum and mitochondria. Components of this complex are involved in the control of mitochondrial shape and protein biogenesis and may function in phospholipid exchange. MDM10 is involved in the late assembly steps of the general translocase of the mitochondrial outer membrane (TOM complex). Functions in the TOM40-specific route of the assembly of outer membrane beta-barrel proteins, including the association of TOM40 with the receptor TOM22 and small TOM proteins. Can associate with the SAM(core) complex as well as the MDM12-MMM1 complex, both involved in late steps of the major beta-barrel assembly pathway, that is responsible for biogenesis of all outer membrane beta-barrel proteins. May act as a switch that shuttles between both complexes and channels precursor proteins into the TOM40-specific pathway. Plays a role in mitochondrial morphology and in the inheritance of mitochondria. This Yarrowia lipolytica (strain CLIB 122 / E 150) (Yeast) protein is Mitochondrial distribution and morphology protein 10.